The following is a 53-amino-acid chain: UPF0391 membrane protein PputGB1_0151 (53 aa).

The next 2 helical transmembrane spans lie at 4-24 (WAIT…GGIA) and 29-49 (GIAK…FFFG).

It belongs to the UPF0391 family.

The protein localises to the cell membrane. This chain is UPF0391 membrane protein PputGB1_0151, found in Pseudomonas putida (strain GB-1).